The following is a 644-amino-acid chain: Acetyl-coenzyme A synthetase (644 aa).

Residues 190 to 193 and T308 each bind CoA; that span reads RGSK. Residues 384–386, 408–413, D497, and R512 contribute to the ATP site; these read GEP and DTWWQT. S520 is a CoA binding site. ATP is bound at residue R523. Residues V534, H536, and V539 each coordinate Mg(2+). R581 lines the CoA pocket. Residue K606 is modified to N6-acetyllysine.

It belongs to the ATP-dependent AMP-binding enzyme family. Mg(2+) is required as a cofactor. In terms of processing, acetylated. Deacetylation by the SIR2-homolog deacetylase activates the enzyme.

It carries out the reaction acetate + ATP + CoA = acetyl-CoA + AMP + diphosphate. Catalyzes the conversion of acetate into acetyl-CoA (AcCoA), an essential intermediate at the junction of anabolic and catabolic pathways. AcsA undergoes a two-step reaction. In the first half reaction, AcsA combines acetate with ATP to form acetyl-adenylate (AcAMP) intermediate. In the second half reaction, it can then transfer the acetyl group from AcAMP to the sulfhydryl group of CoA, forming the product AcCoA. This chain is Acetyl-coenzyme A synthetase, found in Magnetococcus marinus (strain ATCC BAA-1437 / JCM 17883 / MC-1).